The sequence spans 219 residues: MENFRYEIESMLQLVGVDMDVISVDPYSDEKLAEFVSELLLWNKKINLIGKSTEKSIWSRHIAESLILLPYVQGSTVLDMGTGAGLPGLPLQIVSGSNIEMHLVEKDQKKVSFLKHVSANLNLKNIRIYNKQFTEKGFDGAPLVNVVTSRALAEINQLVAWADPCLVNGGSLVLIKGPVCKAELEKFEESDLSDKYENGEIVEYKIDSHDVNIVIIKKK.

Positions 81, 86, and 150 each coordinate S-adenosyl-L-methionine.

The protein belongs to the methyltransferase superfamily. RNA methyltransferase RsmG family.

The protein localises to the cytoplasm. It catalyses the reaction guanosine(527) in 16S rRNA + S-adenosyl-L-methionine = N(7)-methylguanosine(527) in 16S rRNA + S-adenosyl-L-homocysteine. Functionally, specifically methylates the N7 position of guanine in position 527 of 16S rRNA. This is Ribosomal RNA small subunit methyltransferase G from Magnetococcus marinus (strain ATCC BAA-1437 / JCM 17883 / MC-1).